A 789-amino-acid polypeptide reads, in one-letter code: Probable 3-hydroxyacyl-CoA dehydrogenase (789 aa).

It belongs to the 3-hydroxyacyl-CoA dehydrogenase family.

It catalyses the reaction a (3S)-3-hydroxyacyl-CoA + NAD(+) = a 3-oxoacyl-CoA + NADH + H(+). The protein operates within lipid metabolism; fatty acid beta-oxidation. Involved in the degradation of long-chain fatty acids. In Bacillus subtilis (strain 168), this protein is Probable 3-hydroxyacyl-CoA dehydrogenase (fadN).